A 503-amino-acid chain; its full sequence is AMP phosphorylase (503 aa).

AMP-binding positions include Gly168, 194-199 (SRAITS), and Thr203. Catalysis depends on Asp256, which acts as the Proton donor. AMP contacts are provided by Ser264 and Lys288.

It belongs to the thymidine/pyrimidine-nucleoside phosphorylase family. Type 2 subfamily. Forms an exceptionally large macromolecular structure (&gt;40-mers) in solution.

It carries out the reaction AMP + phosphate = alpha-D-ribose 1,5-bisphosphate + adenine. The enzyme catalyses CMP + phosphate = cytosine + alpha-D-ribose 1,5-bisphosphate. The catalysed reaction is UMP + phosphate = alpha-D-ribose 1,5-bisphosphate + uracil. Its activity is regulated as follows. AMP phosphorolysis is allosterically regulated by the substrate AMP. Its function is as follows. Catalyzes the conversion of AMP and phosphate to adenine and ribose 1,5-bisphosphate (R15P). Exhibits phosphorylase activity toward CMP, dCMP and UMP in addition to AMP. Functions in an archaeal AMP degradation pathway, together with R15P isomerase and RubisCO. The polypeptide is AMP phosphorylase (Thermococcus kodakarensis (strain ATCC BAA-918 / JCM 12380 / KOD1) (Pyrococcus kodakaraensis (strain KOD1))).